A 388-amino-acid polypeptide reads, in one-letter code: Succinate--CoA ligase [ADP-forming] subunit beta (388 aa).

Positions 9–244 (KQLFARYGLP…QSQEDPRAAQ (236 aa)) constitute an ATP-grasp domain. ATP-binding positions include K46, 53-55 (GRG), E99, T102, and E107. Mg(2+) is bound by residues N199 and D213. Substrate contacts are provided by residues N264 and 321 to 323 (GIV).

This sequence belongs to the succinate/malate CoA ligase beta subunit family. As to quaternary structure, heterotetramer of two alpha and two beta subunits. The cofactor is Mg(2+).

The catalysed reaction is succinate + ATP + CoA = succinyl-CoA + ADP + phosphate. It carries out the reaction GTP + succinate + CoA = succinyl-CoA + GDP + phosphate. The protein operates within carbohydrate metabolism; tricarboxylic acid cycle; succinate from succinyl-CoA (ligase route): step 1/1. In terms of biological role, succinyl-CoA synthetase functions in the citric acid cycle (TCA), coupling the hydrolysis of succinyl-CoA to the synthesis of either ATP or GTP and thus represents the only step of substrate-level phosphorylation in the TCA. The beta subunit provides nucleotide specificity of the enzyme and binds the substrate succinate, while the binding sites for coenzyme A and phosphate are found in the alpha subunit. The sequence is that of Succinate--CoA ligase [ADP-forming] subunit beta from Shigella flexneri serotype 5b (strain 8401).